The following is a 293-amino-acid chain: Elongation factor Ts (293 aa).

An involved in Mg(2+) ion dislocation from EF-Tu region spans residues Thr80–Val83.

It belongs to the EF-Ts family.

The protein resides in the cytoplasm. In terms of biological role, associates with the EF-Tu.GDP complex and induces the exchange of GDP to GTP. It remains bound to the aminoacyl-tRNA.EF-Tu.GTP complex up to the GTP hydrolysis stage on the ribosome. The chain is Elongation factor Ts from Staphylococcus aureus (strain USA300).